Reading from the N-terminus, the 338-residue chain is Bacteriochlorophyllide d C-20 methyltransferase (338 aa).

S-adenosyl-L-methionine is bound at residue glutamate 147. Histidine 150 provides a ligand contact to substrate. Residues glycine 177, asparagine 200, 227-228, and 242-243 contribute to the S-adenosyl-L-methionine site; these read DI and CR. The active-site Nucleophile is the tyrosine 246. Histidine 290 contributes to the a bacteriochlorophyll d binding site.

The protein belongs to the class I-like SAM-binding methyltransferase superfamily. Cation-independent O-methyltransferase family. In terms of assembly, homodimer.

It catalyses the reaction a bacteriochlorophyllide d + S-adenosyl-L-methionine = a bacteriochlorophyllide c + S-adenosyl-L-homocysteine + H(+). It functions in the pathway porphyrin-containing compound metabolism; bacteriochlorophyll biosynthesis (light-independent). Involved in the biosynthesis of the major light-harvesting pigment bacteriochlorophyll c (BChlc), which confers a significant competitive advantage to green sulfur bacteria living at limiting red and near-infrared light intensities. Catalyzes the methylation at the C-20 position of the cyclic tetrapyrrole chlorin of bacteriochlorophyll d (BChld) to produce bacteriochlorophyll c (BChlc) using S-adenosylmethionine (SAM) as a methyl source. The chain is Bacteriochlorophyllide d C-20 methyltransferase from Chlorobaculum tepidum (strain ATCC 49652 / DSM 12025 / NBRC 103806 / TLS) (Chlorobium tepidum).